The primary structure comprises 171 residues: uncharacterized protein (171 aa).

This sequence to A.aeolicus aq_616.

This is an uncharacterized protein from Aquifex aeolicus (strain VF5).